The sequence spans 400 residues: Cytochrome b (400 aa).

Residues 47–67 form a helical membrane-spanning segment; it reads LGSIAGIALVIQIITGVILAM. The heme b site is built by His97 and His111. A run of 8 helical transmembrane segments spans residues 98–118, 131–151, 166–186, 194–214, 247–267, 306–326, 341–361, and 368–388; these read AVGA…GLYY, IGII…VLPW, FSAI…GFSV, FFSL…LHLV, FVGF…EPNY, LGGV…PWLD, IAFW…GQPA, and ISRF…PLIG. Heme b is bound by residues His198 and His212.

Belongs to the cytochrome b family. In terms of assembly, the main subunits of complex b-c1 are: cytochrome b, cytochrome c1 and the Rieske protein. Requires heme b as cofactor.

Its subcellular location is the cell membrane. Functionally, component of the ubiquinol-cytochrome c reductase complex (complex III or cytochrome b-c1 complex), which is a respiratory chain that generates an electrochemical potential coupled to ATP synthesis. This is Cytochrome b (petB) from Rickettsia bellii (strain RML369-C).